A 189-amino-acid chain; its full sequence is MEYKRPIGLDIDLETGVIPGAKKLVRRLSDLKGYFLDEEAYNELLKEDPVVYEVYAIEQEEKEGDLNFATTVLYPGKVGKEFFFTKGHFHAKPDRAEIYYGIKGKGGMLLQTPEGEAEWIPMGPGTVVYVPPYWAHRTVNTGNEPFIFLAIYPADAGHDYGSIKEKGFSKIVIEEDGEVKVVDNPRWKE.

The Fe cation site is built by His88, His90, Glu97, and His136.

The protein belongs to the archaeal-type GPI family. In terms of assembly, homodimer.

The protein localises to the cytoplasm. The catalysed reaction is alpha-D-glucose 6-phosphate = beta-D-fructose 6-phosphate. Its pathway is carbohydrate degradation; glycolysis; D-glyceraldehyde 3-phosphate and glycerone phosphate from D-glucose: step 2/4. In Thermococcus kodakarensis (strain ATCC BAA-918 / JCM 12380 / KOD1) (Pyrococcus kodakaraensis (strain KOD1)), this protein is Glucose-6-phosphate isomerase.